The chain runs to 192 residues: Per os infectivity factor 6 (192 aa).

Residues 154–174 (IAYVFLFFICIVLLSVLAVFF) form a helical membrane-spanning segment.

The protein localises to the host membrane. It localises to the virion. Its subcellular location is the host cytoplasm. The protein resides in the host nucleus. In terms of biological role, per os infectivity factor. This chain is Per os infectivity factor 6 (AC68), found in Autographa californica nuclear polyhedrosis virus (AcMNPV).